The chain runs to 204 residues: MGKRLNSKHKIDRRLGVNLWGRPKSPINKREYGPGEHGQRRRKPSDFGIQLMAKQKLKGYYGNISEKAFRKYYEEASSRRGDTSENLISILETRLDAVVYRMKIVPTVFSSRQIINHGHILVNGRRVSVASYRVQEGDVIEVKEKSRQMPLILEALQSHERDIPEYITMDLAHAKGTFLRAPKLEDVPYPVQMEPNLVVEFYSR.

The disordered stretch occupies residues 20–46 (WGRPKSPINKREYGPGEHGQRRRKPSD). A compositionally biased stretch (basic and acidic residues) spans 28–38 (NKREYGPGEHG). The S4 RNA-binding domain occupies 93–156 (TRLDAVVYRM…RQMPLILEAL (64 aa)).

Belongs to the universal ribosomal protein uS4 family. Part of the 30S ribosomal subunit. Contacts protein S5. The interaction surface between S4 and S5 is involved in control of translational fidelity.

Functionally, one of the primary rRNA binding proteins, it binds directly to 16S rRNA where it nucleates assembly of the body of the 30S subunit. With S5 and S12 plays an important role in translational accuracy. The protein is Small ribosomal subunit protein uS4 of Rhodospirillum rubrum (strain ATCC 11170 / ATH 1.1.1 / DSM 467 / LMG 4362 / NCIMB 8255 / S1).